Reading from the N-terminus, the 257-residue chain is uncharacterized protein (257 aa).

This is an uncharacterized protein from Bacillus subtilis (strain 168).